The chain runs to 236 residues: MQILTWALAALAAIPAVTAAPVETVEASSMDELVERSPNVTLVARGTPSSTGTHNGFYYSHWTDNAGADVTYSMGGGGQFSYTWRNSGNFVGGKGWNPGNAGRVINYSGSYSPQGNSYLAVYGWTRNPLIEYYVVESFGSYNPSSGATNRGSFTSDGSTYDILVSTRYNQPSIDGTKTFQQFWSVRRNKRASGTVTFANHVNAWRNAGLNLGNQWNYQILAVEGYHSSGSASMTVR.

Positions 1 to 45 (MQILTWALAALAAIPAVTAAPVETVEASSMDELVERSPNVTLVAR) are cleaved as a signal peptide. Asparagine 39 and asparagine 106 each carry an N-linked (GlcNAc...) asparagine glycan. The region spanning 46–236 (GTPSSTGTHN…SSGSASMTVR (191 aa)) is the GH11 domain. The active-site Nucleophile is the glutamate 131. Glutamate 223 acts as the Proton donor in catalysis.

Belongs to the glycosyl hydrolase 11 (cellulase G) family.

The protein resides in the secreted. The enzyme catalyses Endohydrolysis of (1-&gt;4)-beta-D-xylosidic linkages in xylans.. The protein operates within glycan degradation; xylan degradation. In terms of biological role, endo-1,4-beta-xylanase involved in the hydrolysis of xylan, a major structural heterogeneous polysaccharide found in plant biomass representing the second most abundant polysaccharide in the biosphere, after cellulose. The polypeptide is Endo-1,4-beta-xylanase 3 (XYL3) (Pyricularia grisea (Crabgrass-specific blast fungus)).